Here is a 260-residue protein sequence, read N- to C-terminus: Probable carbohydrate esterase At4g34215 (260 aa).

Residues 1 to 22 (MEGGSITPGEDKPEIQSPIPPN) form a disordered region. Residues Ser31, Asp235, and His238 contribute to the active site.

The protein belongs to the carbohydrate esterase 6 family.

The protein is Probable carbohydrate esterase At4g34215 of Arabidopsis thaliana (Mouse-ear cress).